A 391-amino-acid chain; its full sequence is Processive diacylglycerol beta-glucosyltransferase (391 aa).

The protein belongs to the glycosyltransferase 28 family. UgtP subfamily.

Its subcellular location is the cell membrane. The enzyme catalyses a 1,2-diacyl-3-O-(beta-D-glucopyranosyl)-sn-glycerol + UDP-alpha-D-glucose = a 1,2-diacyl-3-O-(beta-D-Glc-(1-&gt;6)-beta-D-Glc)-sn-glycerol + UDP + H(+). It carries out the reaction a 1,2-diacyl-sn-glycerol + UDP-alpha-D-glucose = a 1,2-diacyl-3-O-(beta-D-glucopyranosyl)-sn-glycerol + UDP + H(+). The protein operates within glycolipid metabolism; diglucosyl-diacylglycerol biosynthesis. Its function is as follows. Processive glucosyltransferase involved in the biosynthesis of both the bilayer- and non-bilayer-forming membrane glucolipids. Is able to successively transfer two glucosyl residues to diacylglycerol (DAG), thereby catalyzing the formation of beta-monoglucosyl-DAG (3-O-(beta-D-glucopyranosyl)-1,2-diacyl-sn-glycerol) and beta-diglucosyl-DAG (3-O-(beta-D-glucopyranosyl-beta-(1-&gt;6)-D-glucopyranosyl)-1,2-diacyl-sn-glycerol). Beta-diglucosyl-DAG is the predominant glycolipid found in Bacillales and is also used as a membrane anchor for lipoteichoic acid (LTA). The chain is Processive diacylglycerol beta-glucosyltransferase from Staphylococcus aureus (strain MRSA252).